Consider the following 344-residue polypeptide: DNA-directed RNA polymerase subunit alpha (344 aa).

The alpha N-terminal domain (alpha-NTD) stretch occupies residues 1-238 (MKVIKTAPLI…KQLGVFGEKP (238 aa)). Residues 253-344 (DAKDLSAKIE…EKLEDKGGND (92 aa)) are alpha C-terminal domain (alpha-CTD).

This sequence belongs to the RNA polymerase alpha chain family. In terms of assembly, homodimer. The RNAP catalytic core consists of 2 alpha, 1 beta, 1 beta' and 1 omega subunit. When a sigma factor is associated with the core the holoenzyme is formed, which can initiate transcription.

It catalyses the reaction RNA(n) + a ribonucleoside 5'-triphosphate = RNA(n+1) + diphosphate. Functionally, DNA-dependent RNA polymerase catalyzes the transcription of DNA into RNA using the four ribonucleoside triphosphates as substrates. This Helicobacter acinonychis (strain Sheeba) protein is DNA-directed RNA polymerase subunit alpha.